The primary structure comprises 345 residues: S-adenosylmethionine:tRNA ribosyltransferase-isomerase (345 aa).

This sequence belongs to the QueA family. Monomer.

The protein localises to the cytoplasm. It carries out the reaction 7-aminomethyl-7-carbaguanosine(34) in tRNA + S-adenosyl-L-methionine = epoxyqueuosine(34) in tRNA + adenine + L-methionine + 2 H(+). It participates in tRNA modification; tRNA-queuosine biosynthesis. In terms of biological role, transfers and isomerizes the ribose moiety from AdoMet to the 7-aminomethyl group of 7-deazaguanine (preQ1-tRNA) to give epoxyqueuosine (oQ-tRNA). In Shewanella amazonensis (strain ATCC BAA-1098 / SB2B), this protein is S-adenosylmethionine:tRNA ribosyltransferase-isomerase.